Consider the following 318-residue polypeptide: Cell surface sensor SHO1 (318 aa).

The disordered stretch occupies residues 1–23; the sequence is MPSYGSLHSPSLRKMEHSRGQYG. At 1 to 38 the chain is on the cytoplasmic side; sequence MPSYGSLHSPSLRKMEHSRGQYGGGRKGMSLGNVIGDP. Residues 39–59 traverse the membrane as a helical segment; the sequence is FALATISIAGLAWLIAFIASI. At 60–71 the chain is on the extracellular side; the sequence is VAQIQTTQGFPT. Residues 72–92 form a helical membrane-spanning segment; that stretch reads YTWWTVVFYFFLIPGVFVVVA. Topologically, residues 93–100 are cytoplasmic; sequence SDTIQTYH. Residues 101 to 121 traverse the membrane as a helical segment; that stretch reads VALVGYMACGLVLTTSSVNGL. Residues 122 to 130 lie on the Extracellular side of the membrane; the sequence is VYSTNGAKE. The helical transmembrane segment at 131–151 threads the bilayer; it reads AAAAGFILLSMVTIVWIFYFG. Residues 152–318 lie on the Cytoplasmic side of the membrane; that stretch reads SAPSAMPRAY…IAPSNYLILL (167 aa). Residues 172-255 form a disordered region; the sequence is TSNNRQTMTG…AGGAADAEIV (84 aa). Residues 190-214 show a composition bias toward polar residues; it reads ETSTSVQPPQMYTSAQLNGFENPSP. The segment covering 237–250 has biased composition (low complexity); sequence GLPKTTTPPAGGAA. Residues 259-318 enclose the SH3 domain; the sequence is EYPYRAKAIYTYEANPDDANEISFSKHEILEVSDVSGRWWQARKETGETGIAPSNYLILL.

The protein belongs to the SHO1 family. In terms of assembly, forms homooligomers.

The protein resides in the cell membrane. In terms of biological role, MSB2 and SHO1 have overlapping functions in recognizing various surface signals for MAPK PMK1 activation and appressorium formation. While MSB2 is critical for sensing surface hydrophobicity and cutin monomers, SHO1 may play a more important role in recognizing rice leaf waxes. The protein is Cell surface sensor SHO1 of Pyricularia oryzae (strain 70-15 / ATCC MYA-4617 / FGSC 8958) (Rice blast fungus).